The primary structure comprises 130 residues: Flagellar assembly factor FliW (130 aa).

It belongs to the FliW family. As to quaternary structure, interacts with translational regulator CsrA and flagellin(s).

Its subcellular location is the cytoplasm. Its function is as follows. Acts as an anti-CsrA protein, binds CsrA and prevents it from repressing translation of its target genes, one of which is flagellin. Binds to flagellin and participates in the assembly of the flagellum. The sequence is that of Flagellar assembly factor FliW from Clostridioides difficile (strain 630) (Peptoclostridium difficile).